Reading from the N-terminus, the 368-residue chain is 1-deoxy-D-xylulose 5-phosphate reductoisomerase (368 aa).

NADPH contacts are provided by T7, G8, S9, I10, G31, K32, N33, and N113. K114 is a binding site for 1-deoxy-D-xylulose 5-phosphate. E115 is an NADPH binding site. D133 contributes to the Mn(2+) binding site. Positions 134, 135, 158, and 181 each coordinate 1-deoxy-D-xylulose 5-phosphate. A Mn(2+)-binding site is contributed by E135. G187 lines the NADPH pocket. The 1-deoxy-D-xylulose 5-phosphate site is built by S194, N199, K200, and E203. E203 provides a ligand contact to Mn(2+).

This sequence belongs to the DXR family. Mg(2+) serves as cofactor. Requires Mn(2+) as cofactor.

The catalysed reaction is 2-C-methyl-D-erythritol 4-phosphate + NADP(+) = 1-deoxy-D-xylulose 5-phosphate + NADPH + H(+). Its pathway is isoprenoid biosynthesis; isopentenyl diphosphate biosynthesis via DXP pathway; isopentenyl diphosphate from 1-deoxy-D-xylulose 5-phosphate: step 1/6. Catalyzes the NADPH-dependent rearrangement and reduction of 1-deoxy-D-xylulose-5-phosphate (DXP) to 2-C-methyl-D-erythritol 4-phosphate (MEP). The polypeptide is 1-deoxy-D-xylulose 5-phosphate reductoisomerase (Helicobacter pylori (strain J99 / ATCC 700824) (Campylobacter pylori J99)).